We begin with the raw amino-acid sequence, 194 residues long: 7-methyl-GTP pyrophosphatase (194 aa).

Asp-69 (proton acceptor) is an active-site residue.

It belongs to the Maf family. YceF subfamily. The cofactor is a divalent metal cation.

It localises to the cytoplasm. The catalysed reaction is N(7)-methyl-GTP + H2O = N(7)-methyl-GMP + diphosphate + H(+). Its function is as follows. Nucleoside triphosphate pyrophosphatase that hydrolyzes 7-methyl-GTP (m(7)GTP). May have a dual role in cell division arrest and in preventing the incorporation of modified nucleotides into cellular nucleic acids. This is 7-methyl-GTP pyrophosphatase (yceF1) from Shigella boydii serotype 4 (strain Sb227).